Reading from the N-terminus, the 428-residue chain is Pregnancy-specific beta-1-glycoprotein 3 (428 aa).

An N-terminal signal peptide occupies residues 1 to 34; the sequence is MGPLSAPPCTQRITWKGLLLTALLLNFWNLPTTA. The region spanning 35 to 144 is the Ig-like V-type domain; sequence QVTIEAEPTK…TGHFTFTLYL (110 aa). 2 N-linked (GlcNAc...) asparagine glycosylation sites follow: Asn-104 and Asn-111. Positions 127 to 129 match the Cell attachment site motif; it reads RGD. Ig-like C2-type domains follow at residues 147–234, 240–327, and 335–410; these read PKPS…VTLN, PKPY…VTLN, and PRIY…KSMT. 3 disulfides stabilise this stretch: Cys-169/Cys-217, Cys-262/Cys-310, and Cys-354/Cys-394. 2 N-linked (GlcNAc...) asparagine glycosylation sites follow: Asn-268 and Asn-303.

It belongs to the immunoglobulin superfamily. CEA family.

It localises to the secreted. This chain is Pregnancy-specific beta-1-glycoprotein 3 (PSG3), found in Homo sapiens (Human).